Reading from the N-terminus, the 325-residue chain is MLSAAPKPTPQNKKQSFYNKLWCMVCRIQDPDIIEDYAKGDLICRGCGVVVGDRIVDEHSEWRTFSNSESTGADPNRVGGPINPLLRDSALSTTVGKGSKDSGTLTRLQNKSALGTGDRNLLAAFKEIGRMADHMNLPQTVQDRANELFRFMDDKKSTKGRSVDGMVAAALYIACRQEHLSRTFKEIAALTNVPKKEISRCYKIMKETFASVLNLQTISSEDFTSRFCSTLKLPNDVKKGAEHVSKMAMDMGIVAGKSPISVTAASIYMVSQLSPEKRTQKQIADVSGVSEVTIRNAYKDLYAKRDQLIPSDSPYFSQVQYLPTN.

The segment at 19 to 52 (NKLWCMVCRIQDPDIIEDYAKGDLICRGCGVVVG) adopts a TFIIB-type zinc-finger fold. The Zn(2+) site is built by Cys23, Cys26, Cys44, and Cys47. Repeat copies occupy residues 131 to 207 (MADH…IMKE) and 227 to 303 (FCST…DLYA).

This sequence belongs to the TFIIB family.

Its subcellular location is the nucleus. General transcription factor that plays a role in transcription initiation by RNA polymerase II (Pol II). Involved in the pre-initiation complex (PIC) formation and Pol II recruitment at promoter DNA. The sequence is that of Transcription initiation factor IIB (gtf2b) from Dictyostelium discoideum (Social amoeba).